Here is a 225-residue protein sequence, read N- to C-terminus: Uracil-DNA glycosylase (225 aa).

Asp-65 functions as the Proton acceptor in the catalytic mechanism.

It belongs to the uracil-DNA glycosylase (UDG) superfamily. UNG family.

The protein localises to the cytoplasm. The enzyme catalyses Hydrolyzes single-stranded DNA or mismatched double-stranded DNA and polynucleotides, releasing free uracil.. Its function is as follows. Excises uracil residues from the DNA which can arise as a result of misincorporation of dUMP residues by DNA polymerase or due to deamination of cytosine. This chain is Uracil-DNA glycosylase, found in Bacillus anthracis (strain A0248).